We begin with the raw amino-acid sequence, 329 residues long: Serine dehydratase-like (329 aa).

Met-1 carries the post-translational modification N-acetylmethionine. Residue Lys-48 is modified to N6-(pyridoxal phosphate)lysine.

It belongs to the serine/threonine dehydratase family. In terms of assembly, monomer. Homodimer. It depends on pyridoxal 5'-phosphate as a cofactor. As to expression, abundantly expressed in liver.

The enzyme catalyses L-serine = pyruvate + NH4(+). It carries out the reaction L-threonine = 2-oxobutanoate + NH4(+). The catalysed reaction is L-glutamate = D-glutamate. Functionally, catalyzes the pyridoxal-phosphate-dependent dehydrative deamination of L-threonine and L-serine to ammonia and alpha-ketobutyrate and pyruvate, respectively. Also exhibits racemase activity towards L-glutamate and D-glutamate. This Mus musculus (Mouse) protein is Serine dehydratase-like (Sdsl).